The sequence spans 324 residues: D-alanine--D-alanine ligase (324 aa).

One can recognise an ATP-grasp domain in the interval 112–312 (KAVLAAAGVT…FDQLVLWIVE (201 aa)). Residue 139 to 193 (LQPPYVVKPNAEGSSVGVFIIKEGANRPPEEVGAPSWTFGEEVMVEPYIQGMELA) participates in ATP binding. Residues Asp265, Glu279, and Asn281 each coordinate Mg(2+).

This sequence belongs to the D-alanine--D-alanine ligase family. Mg(2+) serves as cofactor. The cofactor is Mn(2+).

Its subcellular location is the cytoplasm. It carries out the reaction 2 D-alanine + ATP = D-alanyl-D-alanine + ADP + phosphate + H(+). The protein operates within cell wall biogenesis; peptidoglycan biosynthesis. In terms of biological role, cell wall formation. This is D-alanine--D-alanine ligase from Caulobacter vibrioides (strain ATCC 19089 / CIP 103742 / CB 15) (Caulobacter crescentus).